Reading from the N-terminus, the 303-residue chain is MSFTTKVKEELIHLSTGDNNELAAIIKLSGSLGLAHQSLHLSITTENAKIARYIYSLIEDAYVIVPEIRYHQKTNLRKNRVYTVYVEQGVETILADLKLADSFFGLETGIEPQVLSDDNAGRSYLKGAFLAAGSIRDPESGKYQLEIYSVYLDHAQDLAQLMQKFMLDAKTIEHKSGAVTYLQKAEDIMDFLIIIGAMSCKEDFEAIKLLREARNDINRANNAETANIAKTISASMKTINNIIKIMDTIGLESLPIELQQVAQLRVKHPDYSIQQVADALEFPITKSGVNHRLRKINKIADDL.

A DNA-binding region (H-T-H motif) is located at residues 272–303 (SIQQVADALEFPITKSGVNHRLRKINKIADDL).

The protein belongs to the WhiA family.

Functionally, involved in cell division and chromosome segregation. In Streptococcus pyogenes serotype M1, this protein is Probable cell division protein WhiA.